We begin with the raw amino-acid sequence, 438 residues long: L-fucose-proton symporter (438 aa).

Residues 2–26 (GNTSIQTQSYRAVDKDAGQSRSYII) lie on the Cytoplasmic side of the membrane. The helical transmembrane segment at 27–53 (PFALLCSLFFLWAVANNLNDILLPQFQ) threads the bilayer. Topologically, residues 54–61 (QAFTLTNF) are periplasmic. The chain crosses the membrane as a helical span at residues 62-87 (QAGLIQSAFYFGYFIIPIPAGILMKK). The Cytoplasmic segment spans residues 88-90 (LSY). A helical membrane pass occupies residues 91–113 (KAGIITGLFLYALGAALFWPAAE). Topologically, residues 114–117 (IMNY) are periplasmic. Residues 118–144 (TLFLVGLFIIAAGLGCLETAANPFVTV) traverse the membrane as a helical segment. Residues 145–150 (LGPESS) are Cytoplasmic-facing. The chain crosses the membrane as a helical span at residues 151 to 178 (GHFRLNLAQTFNSFGAIIAVVFGQSLIL). The Periplasmic segment spans residues 179 to 193 (SNVPHQSQDVLDKMS). The helical transmembrane segment at 194 to 227 (PEQLSAYKHSLVLSVQTPYMIIVAIVLLVALLIM) threads the bilayer. The Cytoplasmic segment spans residues 228-257 (LTKFPALQSDNHSDAKQGSFSASLSRLARI). Residues 258–287 (RHWRWAVLAQFCYVGAQTACWSYLIRYAVE) traverse the membrane as a helical segment. Residues 288-293 (EIPGMT) lie on the Periplasmic side of the membrane. A helical transmembrane segment spans residues 294-319 (AGFAANYLTGTMVCFFIGRFTGTWLI). Over 320–324 (SRFAP) the chain is Cytoplasmic. The helical transmembrane segment at 325–343 (HKVLAAYALIAMALCLISA) threads the bilayer. Residues 344–347 (FAGG) lie on the Periplasmic side of the membrane. Residues 348-372 (HVGLIALTLCSAFMSIQYPTIFSLG) traverse the membrane as a helical segment. Topologically, residues 373-379 (IKNLGQD) are cytoplasmic. The helical transmembrane segment at 380-407 (TKYGSSFIVMTIIGGGIVTPVMGFVSDA) threads the bilayer. The Periplasmic segment spans residues 408 to 410 (AGN). Residues 411–430 (IPTAELIPALCFAVIFIFAR) form a helical membrane-spanning segment. At 431–438 (FRSQTATN) the chain is on the cytoplasmic side.

Belongs to the major facilitator superfamily. FHS transporter (TC 2.A.1.7) family.

The protein localises to the cell inner membrane. The enzyme catalyses L-fucose(in) + H(+)(in) = L-fucose(out) + H(+)(out). It catalyses the reaction D-arabinose(out) + H(+)(out) = D-arabinose(in) + H(+)(in). It carries out the reaction L-galactose(out) + H(+)(out) = L-galactose(in) + H(+)(in). In terms of biological role, mediates the uptake of L-fucose across the boundary membrane with the concomitant transport of protons into the cell (symport system). Can also transport L-galactose and D-arabinose, but at reduced rates compared with L-fucose. Is not able to transport L-rhamnose and L-arabinose. Binds D-arabinose with the highest affinity, followed by L-fucose, and then by L-galactose. The chain is L-fucose-proton symporter (fucP) from Escherichia coli (strain K12).